Consider the following 786-residue polypeptide: MITEDAFPVEPWQVRETKLNLNLLAQSESLFALSNGHIGLRGNLDEGEPFGLPGTYLNSFYEIRPLPYAEAGYGYPEAGQTVVDVTNGKIFRLLVGDEPFDVRYGELISHERILDLRAGTLTRRAHWRSPAGKQVKVTSTRLVSLAHRSVAAIEYVVEAIEEFVRVTVQSELVTNEDVPETSADPRVSAILDRPLQAVEHERTERGALLMHRTRASALMMAAGMEHEVEVPGRVEITTDARPDLARTTVICGLRPGQKLRIVKYLAYGWSSLRSRPALRDQAAGALHGARYSGWQGLLDAQRAYLDDFWDSADVEVEGDPECQQAVRFGLFHLLQASARAERRAIPSKGLTGTGYDGHAFWDTEGFVLPVLTYTAPHAVADALRWRASTLDLAKERAAELGLEGAAFPWRTIRGQESSAYWPAGTAAWHINADIAMAFERYRIVTGDGSLEEECGLAVLIETARLWLSLGHHDRHGVWHLDGVTGPDEYTAVVRDNVFTNLMAAHNLHTAADACLRHPEAAEAMGVTTEEMAAWRDAADAANIPYDEELGVHQQCEGFTTLAEWDFEANTTYPLLLHEAYVRLYPAQVIKQADLVLAMQWQSHAFTPEQKARNVDYYERRMVRDSSLSACTQAVMCAEVGHLELAHDYAYEAALIDLRDLHRNTRDGLHMASLAGAWTALVVGFGGLRDDEGILSIDPQLPDGISRLRFRLRWRGFRLIVDANHTDVTFILGDGPGTQLTMRHAGQDLTLHTDTPSTIAVRTRKPLLPPPPQPPGREPVHRRALAR.

Position 361–362 (361–362 (WD)) interacts with substrate. The active-site Proton donor is the Glu-488. Residue 590–591 (KQ) coordinates substrate. Positions 762 to 786 (TRKPLLPPPPQPPGREPVHRRALAR) are disordered. Residues 766–776 (LLPPPPQPPGR) show a composition bias toward pro residues.

This sequence belongs to the glycosyl hydrolase 65 family.

This is an uncharacterized protein from Mycobacterium tuberculosis (strain CDC 1551 / Oshkosh).